The sequence spans 391 residues: Dual-specificity RNA methyltransferase RlmN (391 aa).

Glutamate 115 serves as the catalytic Proton acceptor. The Radical SAM core domain maps to glutamate 121 to aspartate 363. Cysteine 128 and cysteine 368 are disulfide-bonded. Cysteine 135, cysteine 139, and cysteine 142 together coordinate [4Fe-4S] cluster. Residues glycine 194 to glutamate 195, serine 226, serine 248 to histidine 250, and asparagine 325 contribute to the S-adenosyl-L-methionine site. Catalysis depends on cysteine 368, which acts as the S-methylcysteine intermediate.

The protein belongs to the radical SAM superfamily. RlmN family. [4Fe-4S] cluster serves as cofactor.

It localises to the cytoplasm. It catalyses the reaction adenosine(2503) in 23S rRNA + 2 reduced [2Fe-2S]-[ferredoxin] + 2 S-adenosyl-L-methionine = 2-methyladenosine(2503) in 23S rRNA + 5'-deoxyadenosine + L-methionine + 2 oxidized [2Fe-2S]-[ferredoxin] + S-adenosyl-L-homocysteine. The catalysed reaction is adenosine(37) in tRNA + 2 reduced [2Fe-2S]-[ferredoxin] + 2 S-adenosyl-L-methionine = 2-methyladenosine(37) in tRNA + 5'-deoxyadenosine + L-methionine + 2 oxidized [2Fe-2S]-[ferredoxin] + S-adenosyl-L-homocysteine. Its function is as follows. Specifically methylates position 2 of adenine 2503 in 23S rRNA and position 2 of adenine 37 in tRNAs. m2A2503 modification seems to play a crucial role in the proofreading step occurring at the peptidyl transferase center and thus would serve to optimize ribosomal fidelity. The chain is Dual-specificity RNA methyltransferase RlmN from Paracoccus denitrificans (strain Pd 1222).